Reading from the N-terminus, the 76-residue chain is Putative membrane protein insertion efficiency factor (76 aa).

This sequence belongs to the UPF0161 family.

The protein localises to the cell inner membrane. Its function is as follows. Could be involved in insertion of integral membrane proteins into the membrane. The protein is Putative membrane protein insertion efficiency factor of Paraburkholderia phytofirmans (strain DSM 17436 / LMG 22146 / PsJN) (Burkholderia phytofirmans).